Reading from the N-terminus, the 1134-residue chain is Protocadherin-18 (1134 aa).

The N-terminal stretch at 1-27 (MYQMNAKMHFTFVFALLVVSFNLDVLG) is a signal peptide. 6 Cadherin domains span residues 28–137 (KNLK…SPQF), 138–246 (SRSL…SPAF), 247–354 (EQQS…KPEI), 361–465 (PGKE…PPHF), 466–576 (QRSR…VPVV), and 582–697 (RNNT…APLD). Residues 28–699 (KNLKYRIYEE…SVSQAPLDVS (672 aa)) are Extracellular-facing. N-linked (GlcNAc...) asparagine glycosylation is present at Asn-103. An N-linked (GlcNAc...) asparagine glycan is attached at Asn-269. N-linked (GlcNAc...) asparagine glycosylation is present at Asn-559. Residues 700 to 720 (MIIIISLGAICAVLLVIMVLF) traverse the membrane as a helical segment. The Cytoplasmic portion of the chain corresponds to 721-1134 (ATRCNREKKD…NKLLQDVRQS (414 aa)). Disordered stretches follow at residues 768–800 (TLPIRSHHRSSPSSSPTLERGQMGSRQSHNSHQ), 868–888 (SLKDSGRGDSEAGDSDYDLGR), and 941–1003 (DYRS…TSSL). The segment covering 791–800 (GSRQSHNSHQ) has biased composition (polar residues). Residues 868–877 (SLKDSGRGDS) show a composition bias toward basic and acidic residues. The interaction with DAB1 stretch occupies residues 892–1134 (IDRLLGEGFS…NKLLQDVRQS (243 aa)).

Interacts with DAB1.

The protein resides in the cell membrane. Its function is as follows. Potential calcium-dependent cell-adhesion protein. This Bos taurus (Bovine) protein is Protocadherin-18 (PCDH18).